The sequence spans 262 residues: Carboxy-S-adenosyl-L-methionine synthase (262 aa).

S-adenosyl-L-methionine-binding positions include tyrosine 50, 84–86 (GCS), 137–138 (DI), asparagine 152, and arginine 219.

Belongs to the class I-like SAM-binding methyltransferase superfamily. Cx-SAM synthase family. Homodimer.

The enzyme catalyses prephenate + S-adenosyl-L-methionine = carboxy-S-adenosyl-L-methionine + 3-phenylpyruvate + H2O. Its function is as follows. Catalyzes the conversion of S-adenosyl-L-methionine (SAM) to carboxy-S-adenosyl-L-methionine (Cx-SAM). This chain is Carboxy-S-adenosyl-L-methionine synthase, found in Psychrobacter arcticus (strain DSM 17307 / VKM B-2377 / 273-4).